Reading from the N-terminus, the 415-residue chain is Lipoyl synthase, mitochondrial (415 aa).

The transit peptide at 1–32 (MAASTNRLRFLYSSARTVPQTGSITPISRRTY) directs the protein to the mitochondrion. Positions 20 to 32 (QTGSITPISRRTY) are enriched in polar residues. The interval 20-53 (QTGSITPISRRTYATTEPSPSATGAPATARKRTN) is disordered. Residues 33–47 (ATTEPSPSATGAPAT) are compositionally biased toward low complexity. 7 residues coordinate [4Fe-4S] cluster: C132, C137, C143, C163, C167, C170, and S378. Residues 146–367 (GSDKSAATAT…RQRALDMGFL (222 aa)) form the Radical SAM core domain. The disordered stretch occupies residues 395–415 (AAGTAGESVTDSKAAVDEATR).

Belongs to the radical SAM superfamily. Lipoyl synthase family. It depends on [4Fe-4S] cluster as a cofactor.

The protein localises to the mitochondrion. It catalyses the reaction [[Fe-S] cluster scaffold protein carrying a second [4Fe-4S](2+) cluster] + N(6)-octanoyl-L-lysyl-[protein] + 2 oxidized [2Fe-2S]-[ferredoxin] + 2 S-adenosyl-L-methionine + 4 H(+) = [[Fe-S] cluster scaffold protein] + N(6)-[(R)-dihydrolipoyl]-L-lysyl-[protein] + 4 Fe(3+) + 2 hydrogen sulfide + 2 5'-deoxyadenosine + 2 L-methionine + 2 reduced [2Fe-2S]-[ferredoxin]. It participates in protein modification; protein lipoylation via endogenous pathway; protein N(6)-(lipoyl)lysine from octanoyl-[acyl-carrier-protein]: step 2/2. In terms of biological role, catalyzes the radical-mediated insertion of two sulfur atoms into the C-6 and C-8 positions of the octanoyl moiety bound to the lipoyl domains of lipoate-dependent enzymes, thereby converting the octanoylated domains into lipoylated derivatives. This is Lipoyl synthase, mitochondrial from Aspergillus flavus (strain ATCC 200026 / FGSC A1120 / IAM 13836 / NRRL 3357 / JCM 12722 / SRRC 167).